The sequence spans 284 residues: 4-hydroxy-3-methylbut-2-enyl diphosphate reductase (284 aa).

Residue C12 participates in [4Fe-4S] cluster binding. Residues H40 and H72 each contribute to the (2E)-4-hydroxy-3-methylbut-2-enyl diphosphate site. Residues H40 and H72 each coordinate dimethylallyl diphosphate. H40 and H72 together coordinate isopentenyl diphosphate. [4Fe-4S] cluster is bound at residue C94. Position 122 (H122) interacts with (2E)-4-hydroxy-3-methylbut-2-enyl diphosphate. A dimethylallyl diphosphate-binding site is contributed by H122. An isopentenyl diphosphate-binding site is contributed by H122. Catalysis depends on E124, which acts as the Proton donor. T161 serves as a coordination point for (2E)-4-hydroxy-3-methylbut-2-enyl diphosphate. C193 provides a ligand contact to [4Fe-4S] cluster. 3 residues coordinate (2E)-4-hydroxy-3-methylbut-2-enyl diphosphate: S221, N223, and S264. S221, N223, and S264 together coordinate dimethylallyl diphosphate. Positions 221, 223, and 264 each coordinate isopentenyl diphosphate.

Belongs to the IspH family. Requires [4Fe-4S] cluster as cofactor.

It carries out the reaction isopentenyl diphosphate + 2 oxidized [2Fe-2S]-[ferredoxin] + H2O = (2E)-4-hydroxy-3-methylbut-2-enyl diphosphate + 2 reduced [2Fe-2S]-[ferredoxin] + 2 H(+). The catalysed reaction is dimethylallyl diphosphate + 2 oxidized [2Fe-2S]-[ferredoxin] + H2O = (2E)-4-hydroxy-3-methylbut-2-enyl diphosphate + 2 reduced [2Fe-2S]-[ferredoxin] + 2 H(+). It functions in the pathway isoprenoid biosynthesis; dimethylallyl diphosphate biosynthesis; dimethylallyl diphosphate from (2E)-4-hydroxy-3-methylbutenyl diphosphate: step 1/1. The protein operates within isoprenoid biosynthesis; isopentenyl diphosphate biosynthesis via DXP pathway; isopentenyl diphosphate from 1-deoxy-D-xylulose 5-phosphate: step 6/6. Its function is as follows. Catalyzes the conversion of 1-hydroxy-2-methyl-2-(E)-butenyl 4-diphosphate (HMBPP) into a mixture of isopentenyl diphosphate (IPP) and dimethylallyl diphosphate (DMAPP). Acts in the terminal step of the DOXP/MEP pathway for isoprenoid precursor biosynthesis. In Dehalococcoides mccartyi (strain ATCC BAA-2266 / KCTC 15142 / 195) (Dehalococcoides ethenogenes (strain 195)), this protein is 4-hydroxy-3-methylbut-2-enyl diphosphate reductase.